The primary structure comprises 384 residues: UPF0496 protein At3g28310/At3g28320 (384 aa).

Residues 184 to 215 (QESLFDRVTETKERIAKEIEEVQKRISNVNTA) adopt a coiled-coil conformation. 2 helical membrane passes run 217–237 (IVSH…CIAL) and 242–262 (VGAP…VQWV). Residues 264–361 (VNYVLNNSLE…TTKITEVCET (98 aa)) adopt a coiled-coil conformation.

It belongs to the UPF0496 family.

It localises to the membrane. This Arabidopsis thaliana (Mouse-ear cress) protein is UPF0496 protein At3g28310/At3g28320.